We begin with the raw amino-acid sequence, 155 residues long: Small ribosomal subunit protein uS7 (155 aa).

The protein belongs to the universal ribosomal protein uS7 family. Part of the 30S ribosomal subunit. Contacts proteins S9 and S11.

One of the primary rRNA binding proteins, it binds directly to 16S rRNA where it nucleates assembly of the head domain of the 30S subunit. Is located at the subunit interface close to the decoding center, probably blocks exit of the E-site tRNA. In Corynebacterium aurimucosum (strain ATCC 700975 / DSM 44827 / CIP 107346 / CN-1) (Corynebacterium nigricans), this protein is Small ribosomal subunit protein uS7.